Reading from the N-terminus, the 262-residue chain is Type III pantothenate kinase (262 aa).

Residue 9-16 (DAGNSRIK) coordinates ATP. Substrate contacts are provided by residues Y96 and 103–106 (GSDR). The active-site Proton acceptor is D105. T129 contacts ATP. A substrate-binding site is contributed by T189.

It belongs to the type III pantothenate kinase family. Homodimer. It depends on NH4(+) as a cofactor. Requires K(+) as cofactor.

It is found in the cytoplasm. It carries out the reaction (R)-pantothenate + ATP = (R)-4'-phosphopantothenate + ADP + H(+). The protein operates within cofactor biosynthesis; coenzyme A biosynthesis; CoA from (R)-pantothenate: step 1/5. Its function is as follows. Catalyzes the phosphorylation of pantothenate (Pan), the first step in CoA biosynthesis. The sequence is that of Type III pantothenate kinase from Burkholderia ambifaria (strain MC40-6).